We begin with the raw amino-acid sequence, 288 residues long: 4-diphosphocytidyl-2-C-methyl-D-erythritol kinase (288 aa).

K8 is a catalytic residue. Residue 90–100 participates in ATP binding; the sequence is PVGAGLAGGSS. D132 is a catalytic residue.

This sequence belongs to the GHMP kinase family. IspE subfamily.

It carries out the reaction 4-CDP-2-C-methyl-D-erythritol + ATP = 4-CDP-2-C-methyl-D-erythritol 2-phosphate + ADP + H(+). It functions in the pathway isoprenoid biosynthesis; isopentenyl diphosphate biosynthesis via DXP pathway; isopentenyl diphosphate from 1-deoxy-D-xylulose 5-phosphate: step 3/6. Catalyzes the phosphorylation of the position 2 hydroxy group of 4-diphosphocytidyl-2C-methyl-D-erythritol. This is 4-diphosphocytidyl-2-C-methyl-D-erythritol kinase from Chlamydia trachomatis serovar A (strain ATCC VR-571B / DSM 19440 / HAR-13).